The following is a 321-amino-acid chain: WD repeat-containing protein VIP3 (321 aa).

WD repeat units lie at residues 12 to 55, 58 to 97, 100 to 140, 156 to 195, 198 to 238, 241 to 280, and 283 to 319; these read AHED…LVRT, GHSL…TIAV, APPS…LIST, SSKK…LLHQ, GHNM…LLGS, GHTS…AIQT, and NHND…SLYD.

Component of the nuclear PAF1 complex (PAF1C), which consists of VIP2/ELF7/PAF1, VIP3/SKI8/WDR61, VIP4/LEO1, VIP5/RTF1, VIP6/ELF8/CTR9 and CDC73. Component of the cytoplasmic SKI complex, which consists of SKI2, SKI3 and VIP3/SKI8. Interacts with VIP4 and VIP6.

The protein resides in the nucleus. It is found in the cytoplasm. In terms of biological role, component of the PAF1 complex (PAF1C) which is involved in histone modifications such as methylation on histone H3 'Lys-4' (H3K4me3). Involved in regulation of flowering time. Required for the expression of the flowering repressor and MADS box gene FLC. Required for histone H3 trimethylation on 'Lys-4' (H3K4me3) and histone dimethylation on 'Lys-36' (H3K36me2) at the FLC locus. Prevents trimethylation on 'Lys-27' (H3K27me3) at the same locus. Not required for meiotic recombination or progression. Component of the SKI complex which is thought to be involved in exosome-mediated RNA decay and associates with transcriptionally active genes in a manner dependent on PAF1 complex (PAF1C). Required for proper progression of cell differentiation process. The chain is WD repeat-containing protein VIP3 from Arabidopsis thaliana (Mouse-ear cress).